The chain runs to 476 residues: F-box protein At5g07670 (476 aa).

The F-box domain maps to 59 to 111 (PDFTLLLPDLILIRVIQKIPNSQRKNLSLVCKRWFRLHGRLVRSFKVSDWEFL).

The chain is F-box protein At5g07670 from Arabidopsis thaliana (Mouse-ear cress).